Consider the following 367-residue polypeptide: DNA replication and repair protein RecF (367 aa).

ATP is bound at residue 30–37 (GANGSGKT).

Belongs to the RecF family.

It is found in the cytoplasm. In terms of biological role, the RecF protein is involved in DNA metabolism; it is required for DNA replication and normal SOS inducibility. RecF binds preferentially to single-stranded, linear DNA. It also seems to bind ATP. This is DNA replication and repair protein RecF from Pseudomonas fluorescens (strain ATCC BAA-477 / NRRL B-23932 / Pf-5).